We begin with the raw amino-acid sequence, 238 residues long: Large ribosomal subunit protein uL1 (238 aa).

Belongs to the universal ribosomal protein uL1 family. In terms of assembly, part of the 50S ribosomal subunit.

Binds directly to 23S rRNA. The L1 stalk is quite mobile in the ribosome, and is involved in E site tRNA release. Functionally, protein L1 is also a translational repressor protein, it controls the translation of the L11 operon by binding to its mRNA. The sequence is that of Large ribosomal subunit protein uL1 from Salinispora tropica (strain ATCC BAA-916 / DSM 44818 / JCM 13857 / NBRC 105044 / CNB-440).